Consider the following 356-residue polypeptide: Protein RecA (356 aa).

Residue 68-75 participates in ATP binding; sequence GPESSGKT.

This sequence belongs to the RecA family.

It is found in the cytoplasm. Its function is as follows. Can catalyze the hydrolysis of ATP in the presence of single-stranded DNA, the ATP-dependent uptake of single-stranded DNA by duplex DNA, and the ATP-dependent hybridization of homologous single-stranded DNAs. It interacts with LexA causing its activation and leading to its autocatalytic cleavage. This chain is Protein RecA, found in Clostridium botulinum (strain Eklund 17B / Type B).